We begin with the raw amino-acid sequence, 269 residues long: MTNRYTTLFANLEKRNEGAFIPFVTIGDPNKALSFEIIDTLVSSGADALELGIPFSDPLADGPTIQEANIRALESGITPKDCFDILTKIRAKYPHIPIGLLLYANLVYANGIENFYQKCLDAGVDSILIADVPAHESKEFRDIAKKVGIAQIFIAPPDASESTLKQISELGSGYTYLLSRVGVTGTETAANMPVEDVLTKLREYNAPKPVLGFGISKPEQVQQAIKAGAAGAISGSATVKIIQNNISNKQKMLNELTYFVKEMKAATLN.

Residues glutamate 50 and aspartate 61 each act as proton acceptor in the active site.

This sequence belongs to the TrpA family. In terms of assembly, tetramer of two alpha and two beta chains.

The enzyme catalyses (1S,2R)-1-C-(indol-3-yl)glycerol 3-phosphate + L-serine = D-glyceraldehyde 3-phosphate + L-tryptophan + H2O. It functions in the pathway amino-acid biosynthesis; L-tryptophan biosynthesis; L-tryptophan from chorismate: step 5/5. The alpha subunit is responsible for the aldol cleavage of indoleglycerol phosphate to indole and glyceraldehyde 3-phosphate. This Francisella tularensis subsp. tularensis (strain FSC 198) protein is Tryptophan synthase alpha chain.